Consider the following 53-residue polypeptide: Sec-independent protein translocase protein TatA (53 aa).

A helical transmembrane segment spans residues 1-21; that stretch reads MGMSFSHLLIVLLIIFVLFGA.

Belongs to the TatA/E family. In terms of assembly, the Tat system comprises two distinct complexes: a TatABC complex, containing multiple copies of TatA, TatB and TatC subunits, and a separate TatA complex, containing only TatA subunits. Substrates initially bind to the TatABC complex, which probably triggers association of the separate TatA complex to form the active translocon.

The protein resides in the cell inner membrane. Its function is as follows. Part of the twin-arginine translocation (Tat) system that transports large folded proteins containing a characteristic twin-arginine motif in their signal peptide across membranes. TatA could form the protein-conducting channel of the Tat system. The protein is Sec-independent protein translocase protein TatA of Rickettsia akari (strain Hartford).